Reading from the N-terminus, the 341-residue chain is Delta(1)-pyrroline-2-carboxylate/Delta(1)-piperideine-2-carboxylate reductase (341 aa).

S52 acts as the Charge relay system in catalysis. The active-site Proton donor is H53. R57 serves as a coordination point for substrate. Residue 125–129 (HFAAL) participates in NADP(+) binding. A substrate-binding site is contributed by T165. Residue 183-185 (DMA) participates in NADP(+) binding. 191–192 (HG) lines the substrate pocket. D193 functions as the Charge relay system in the catalytic mechanism. Residues 235–236 (HK) and 308–314 (RMPGERR) contribute to the NADP(+) site.

It belongs to the LDH2/MDH2 oxidoreductase family. Homodimer.

The enzyme catalyses L-pipecolate + NADP(+) = Delta(1)-piperideine-2-carboxylate + NADPH + H(+). It carries out the reaction L-proline + NADP(+) = 1-pyrroline-2-carboxylate + NADPH + H(+). The catalysed reaction is N-methyl-L-alanine + NADP(+) + H2O = methylamine + pyruvate + NADPH + H(+). With respect to regulation, is inhibited by the substrate analog pyrrole-2-carboxylate, but not by N-formylphenylalanine. Catalyzes the reduction of both Delta(1)-pyrroline-2-carboxylate (Pyr2C) and Delta(1)-piperideine-2-carboxylate (Pip2C) to L-proline and L-pipecolate, respectively, using NADPH as the electron donor. Can use NADH instead of NADPH, although with much less efficiency. Plays an essential role in the catabolism of D-proline and D-lysine, which allows P.putida to grow on each of these amino-acids as a sole carbon source; D-lysine appears to be catabolized only through the pipecolate pathway. Can also catalyze the reverse oxidation reactions, albeit at a much lower rate. To a lesser extent, is able to catalyze in vitro the NADPH-dependent formation of N-alkyl-L-amino acids from the corresponding alpha-oxo acids and alkylamines, e.g. the formation of N-methylalanine from pyruvate and N-methylamine; cannot use ammonia as substrate for these reductive amination reactions. Shows neither malate dehydrogenase nor lactate dehydrogenase activity. The chain is Delta(1)-pyrroline-2-carboxylate/Delta(1)-piperideine-2-carboxylate reductase from Pseudomonas putida (Arthrobacter siderocapsulatus).